A 244-amino-acid chain; its full sequence is 1-(5-phosphoribosyl)-5-[(5-phosphoribosylamino)methylideneamino] imidazole-4-carboxamide isomerase (244 aa).

Aspartate 8 functions as the Proton acceptor in the catalytic mechanism. The active-site Proton donor is aspartate 129.

Belongs to the HisA/HisF family.

The protein resides in the cytoplasm. It catalyses the reaction 1-(5-phospho-beta-D-ribosyl)-5-[(5-phospho-beta-D-ribosylamino)methylideneamino]imidazole-4-carboxamide = 5-[(5-phospho-1-deoxy-D-ribulos-1-ylimino)methylamino]-1-(5-phospho-beta-D-ribosyl)imidazole-4-carboxamide. Its pathway is amino-acid biosynthesis; L-histidine biosynthesis; L-histidine from 5-phospho-alpha-D-ribose 1-diphosphate: step 4/9. In Allorhizobium ampelinum (strain ATCC BAA-846 / DSM 112012 / S4) (Agrobacterium vitis (strain S4)), this protein is 1-(5-phosphoribosyl)-5-[(5-phosphoribosylamino)methylideneamino] imidazole-4-carboxamide isomerase.